A 357-amino-acid polypeptide reads, in one-letter code: MAVCPHEWLLYCRPGFEKDLSAELADKTAHAGQGGYPIAARDSGHVRFVLDPETPANEVHRALPLEALVFARQSLVAFPPLEALPRDDRLSAIVDLVVASGWSFESIWQETPDTNEEKALAGLMKALRKPLESTLKKRGALRRKAGGRRLHLFWTAGDRVQLAMSFPGNRAEHLGGIPRLKFPREAPSRSTLKLEEAWHVFVPREAWPTRLSDSMQAADLGAAPGGWTYQLVRKGMYVYAIDNGPMDDALMASGQVEHLCEDGFVWQPPMRLDWLVCDIVDKPMRVIDMVERWLVAPWCHEAIFNLKLPMKKRWDEVSRCLERLASSLDQAGIRARIRCRHLYHDREEVTVHVCLLD.

S-adenosyl-L-methionine-binding positions include Ser-190, 223–226 (APGG), Asp-242, Asp-262, and Asp-278. Lys-307 (proton acceptor) is an active-site residue.

This sequence belongs to the class I-like SAM-binding methyltransferase superfamily. RNA methyltransferase RlmE family. RlmM subfamily. In terms of assembly, monomer.

Its subcellular location is the cytoplasm. It catalyses the reaction cytidine(2498) in 23S rRNA + S-adenosyl-L-methionine = 2'-O-methylcytidine(2498) in 23S rRNA + S-adenosyl-L-homocysteine + H(+). Its function is as follows. Catalyzes the 2'-O-methylation at nucleotide C2498 in 23S rRNA. In Chromohalobacter salexigens (strain ATCC BAA-138 / DSM 3043 / CIP 106854 / NCIMB 13768 / 1H11), this protein is Ribosomal RNA large subunit methyltransferase M.